A 173-amino-acid polypeptide reads, in one-letter code: Photosystem I assembly protein Ycf3 (173 aa).

3 TPR repeats span residues 35–68, 72–105, and 120–153; these read AFVY…EEDP, SYIL…NPRM, and GEKA…APNN.

Belongs to the Ycf3 family.

Its subcellular location is the cellular thylakoid membrane. Its function is as follows. Essential for the assembly of the photosystem I (PSI) complex. May act as a chaperone-like factor to guide the assembly of the PSI subunits. This is Photosystem I assembly protein Ycf3 from Rippkaea orientalis (strain PCC 8801 / RF-1) (Cyanothece sp. (strain PCC 8801)).